A 63-amino-acid chain; its full sequence is Small ribosomal subunit protein bS21 (63 aa).

This sequence belongs to the bacterial ribosomal protein bS21 family.

This is Small ribosomal subunit protein bS21 from Parabacteroides distasonis (strain ATCC 8503 / DSM 20701 / CIP 104284 / JCM 5825 / NCTC 11152).